The following is a 391-amino-acid chain: MLTGITRLFSRVQKLDPRCFLHMSVQATQNSQVPAERPRTVSRTSDSDPAKHGEQHEGQHYSIPLQDLKTVFPHGLPPRYMMQVKTFGEACLMVRKPALELLGYLKNTNFAHPAVRYLLYGEKGTGKTLSLCHAVHFCARHDWLILHIPDAHLWVKNCRELLQSTHNKQRFDQPLEASTWLKNFKTTNERFLSQIKVQEKYVWNKRESTEKGSPLGEVVEQGLTRVRNATDAVGVVLKELKAQSALGLFHLLVAVDGVNALWGRTTLKKEDRTLIAPEELSLVHNLRKMVKNDWHGGAIVLSLSQTGSLFKSRTAYLPHELLGKEGFNALEPFLPILIPNYNPKEFESSFQYYLENNWLQHEKASTEEGRKELRFLSNCNPEQLERLCASL.

Residues 1–17 (MLTGITRLFSRVQKLDP) constitute a mitochondrion transit peptide. The interval 30-59 (NSQVPAERPRTVSRTSDSDPAKHGEQHEGQ) is disordered. Positions 45–59 (SDSDPAKHGEQHEGQ) are enriched in basic and acidic residues. An N6-acetyllysine mark is found at K168 and K200.

It belongs to the mitochondrion-specific ribosomal protein mS29 family. In terms of assembly, component of the mitochondrial ribosome small subunit (28S) which comprises a 12S rRNA and about 30 distinct proteins. Interacts with DELE1. Interacts with NOA1.

It is found in the mitochondrion. The catalysed reaction is GTP + H2O = GDP + phosphate + H(+). In terms of biological role, as a component of the mitochondrial small ribosomal subunit, it plays a role in the translation of mitochondrial mRNAs. Involved in mediating interferon-gamma-induced cell death. Displays GTPase activity in vitro. This Mus musculus (Mouse) protein is Small ribosomal subunit protein mS29.